The chain runs to 952 residues: Ubiquitin carboxyl-terminal hydrolase CYLD (952 aa).

The interval 106 to 589 is interaction with TRIP; it reads CEERLSLFRN…LEIMIGKKKG (484 aa). CAP-Gly domains lie at 153–198 and 253–286; these read LAER…VFVA and DVLPGKESLGYFVGVDMDNPIGNWDGRFDGVQLC. The interval 311–350 is disordered; it reads RRPPKLAFMSRGVGDKGSSSHNKPKVTGSTSDPGSRNRSE. Over residues 327–346 the composition is skewed to polar residues; that stretch reads GSSSHNKPKVTGSTSDPGSR. At serine 383 the chain carries Phosphoserine. The segment at 386–409 is disordered; that stretch reads EMSSDFGHSSPPPQPPSMNSLSSE. Residues 390–465 form an interaction with TRAF2 region; sequence DFGHSSPPPQ…LPISSGNAHG (76 aa). Phosphoserine occurs at positions 414 and 418. Residues 466–680 form an interaction with IKBKG/NEMO region; sequence LEVGSLAEVK…FTSEEKDPEE (215 aa). Residues 488-531 form the CAP-Gly 3 domain; the sequence is GQPPGLSDVLAGLELEDECAGCTDGTFRGTRYFTCALKKALFVK. The USP domain maps to 588–946; that stretch reads KGIQGHYNSC…DAYMCMYQSP (359 aa). Cysteine 597 functions as the Nucleophile in the catalytic mechanism. Residues 777-829 are B-box; it reads LEDTPRQCRICGGLAMYECRECYDDPDISAGKIKQFCKTCSTQVHLHPRRLNH. 8 residues coordinate Zn(2+): cysteine 784, cysteine 787, cysteine 795, cysteine 798, cysteine 813, cysteine 816, histidine 821, and histidine 829. Histidine 867 (proton acceptor) is an active-site residue.

Belongs to the peptidase C19 family. In terms of assembly, interacts (via CAP-Gly domain) with IKBKG/NEMO (via proline-rich C-terminal region). Interacts with TRAF2 and TRIP. Interacts with PLK1, DVL1, DVL3, MAVS, TBK1, IKKE and RIGI. Interacts (via CAP-Gly domain) with microtubules. Interacts with HDAC6 and BCL3. Interacts with MAP3K7. Identified in a complex with TRAF6 and SQSTM1. Interacts with OPTN and SQSTM1. Interacts with CEP350. Interacts with RNF31; the interaction is indirect and is mediated via SPATA2. Interacts with SPATA2 (via the PUB domain); the interaction is direct and recruits CYLD to the LUBAC complex, thereby regulating TNF-alpha-induced necroptosis. Post-translationally, phosphorylated on several serine residues by IKKA and/or IKKB in response to immune stimuli. Phosphorylation requires IKBKG. Phosphorylation abolishes TRAF2 deubiquitination, interferes with the activation of Jun kinases, and strongly reduces CD40-dependent gene activation by NF-kappa-B. In terms of processing, ubiquitinated. Polyubiquitinated in hepatocytes treated with palmitic acid. Ubiquitination is mediated by E3 ligase TRIM47 and leads to proteasomal degradation.

Its subcellular location is the cytoplasm. The protein resides in the perinuclear region. The protein localises to the cytoskeleton. It is found in the cell membrane. It localises to the microtubule organizing center. Its subcellular location is the centrosome. The protein resides in the spindle. The protein localises to the cilium basal body. The catalysed reaction is Thiol-dependent hydrolysis of ester, thioester, amide, peptide and isopeptide bonds formed by the C-terminal Gly of ubiquitin (a 76-residue protein attached to proteins as an intracellular targeting signal).. Functionally, deubiquitinase that specifically cleaves 'Lys-63'- and linear 'Met-1'-linked polyubiquitin chains and is involved in NF-kappa-B activation and TNF-alpha-induced necroptosis. Negatively regulates NF-kappa-B activation by deubiquitinating upstream signaling factors. Contributes to the regulation of cell survival, proliferation and differentiation via its effects on NF-kappa-B activation. Negative regulator of Wnt signaling. Inhibits HDAC6 and thereby promotes acetylation of alpha-tubulin and stabilization of microtubules. Plays a role in the regulation of microtubule dynamics, and thereby contributes to the regulation of cell proliferation, cell polarization, cell migration, and angiogenesis. Required for normal cell cycle progress and normal cytokinesis. Inhibits nuclear translocation of NF-kappa-B. Plays a role in the regulation of inflammation and the innate immune response, via its effects on NF-kappa-B activation. Dispensable for the maturation of intrathymic natural killer cells, but required for the continued survival of immature natural killer cells. Negatively regulates TNFRSF11A signaling and osteoclastogenesis. Involved in the regulation of ciliogenesis, allowing ciliary basal bodies to migrate and dock to the plasma membrane; this process does not depend on NF-kappa-B activation. Ability to remove linear ('Met-1'-linked) polyubiquitin chains regulates innate immunity and TNF-alpha-induced necroptosis: recruited to the LUBAC complex via interaction with SPATA2 and restricts linear polyubiquitin formation on target proteins. Regulates innate immunity by restricting linear polyubiquitin formation on RIPK2 in response to NOD2 stimulation. Involved in TNF-alpha-induced necroptosis by removing linear ('Met-1'-linked) polyubiquitin chains from RIPK1, thereby regulating the kinase activity of RIPK1. Negatively regulates intestinal inflammation by removing 'Lys-63' linked polyubiquitin chain of NLRP6, thereby reducing the interaction between NLRP6 and PYCARD/ASC and formation of the NLRP6 inflammasome. Does not catalyze deubiquitination of heterotypic 'Lys-63'-/'Lys-48'-linked branched ubiquitin chains. Removes 'Lys-63' linked polyubiquitin chain of MAP3K7, which inhibits phosphorylation and blocks downstream activation of the JNK-p38 kinase cascades. Also removes 'Lys-63'-linked polyubiquitin chains of MAP3K1 and MA3P3K3, which inhibit their interaction with MAP2K1 and MAP2K2. This chain is Ubiquitin carboxyl-terminal hydrolase CYLD (Cyld), found in Mus musculus (Mouse).